A 313-amino-acid chain; its full sequence is Ribose-phosphate pyrophosphokinase (313 aa).

ATP contacts are provided by residues 37-39 (DGE) and 96-97 (RQ). Mg(2+) is bound by residues H131 and D170. K193 is an active-site residue. Residues R195, D219, and 223–227 (DTAGT) each bind D-ribose 5-phosphate.

It belongs to the ribose-phosphate pyrophosphokinase family. Class I subfamily. As to quaternary structure, homohexamer. Requires Mg(2+) as cofactor.

It localises to the cytoplasm. It carries out the reaction D-ribose 5-phosphate + ATP = 5-phospho-alpha-D-ribose 1-diphosphate + AMP + H(+). It participates in metabolic intermediate biosynthesis; 5-phospho-alpha-D-ribose 1-diphosphate biosynthesis; 5-phospho-alpha-D-ribose 1-diphosphate from D-ribose 5-phosphate (route I): step 1/1. Functionally, involved in the biosynthesis of the central metabolite phospho-alpha-D-ribosyl-1-pyrophosphate (PRPP) via the transfer of pyrophosphoryl group from ATP to 1-hydroxyl of ribose-5-phosphate (Rib-5-P). This is Ribose-phosphate pyrophosphokinase from Pseudomonas aeruginosa (strain ATCC 15692 / DSM 22644 / CIP 104116 / JCM 14847 / LMG 12228 / 1C / PRS 101 / PAO1).